The chain runs to 853 residues: DNA mismatch repair protein MutS (853 aa).

Gly614–Ser621 provides a ligand contact to ATP.

Belongs to the DNA mismatch repair MutS family.

Its function is as follows. This protein is involved in the repair of mismatches in DNA. It is possible that it carries out the mismatch recognition step. This protein has a weak ATPase activity. This Escherichia coli (strain 55989 / EAEC) protein is DNA mismatch repair protein MutS.